Consider the following 197-residue polypeptide: FMN-dependent NADH:quinone oxidoreductase (197 aa).

Residues serine 10, 16-18 (SQS), 93-96 (MYNF), and 137-140 (TRGG) contribute to the FMN site.

This sequence belongs to the azoreductase type 1 family. As to quaternary structure, homodimer. FMN serves as cofactor.

It carries out the reaction 2 a quinone + NADH + H(+) = 2 a 1,4-benzosemiquinone + NAD(+). It catalyses the reaction N,N-dimethyl-1,4-phenylenediamine + anthranilate + 2 NAD(+) = 2-(4-dimethylaminophenyl)diazenylbenzoate + 2 NADH + 2 H(+). Functionally, quinone reductase that provides resistance to thiol-specific stress caused by electrophilic quinones. Also exhibits azoreductase activity. Catalyzes the reductive cleavage of the azo bond in aromatic azo compounds to the corresponding amines. This Shewanella denitrificans (strain OS217 / ATCC BAA-1090 / DSM 15013) protein is FMN-dependent NADH:quinone oxidoreductase.